The following is a 154-amino-acid chain: uncharacterized protein (154 aa).

A disordered region spans residues proline 91–alanine 154. Residues serine 134–alanine 154 are compositionally biased toward polar residues.

This is an uncharacterized protein from Homo sapiens (Human).